We begin with the raw amino-acid sequence, 84 residues long: Defensin-like protein 140 (84 aa).

The signal sequence occupies residues 1–28 (MSKSLQLIVTVLCIFTILVLGEICLAKG). Intrachain disulfides connect Cys37–Cys81, Cys46–Cys65, Cys51–Cys75, and Cys55–Cys77.

Belongs to the DEFL family.

It localises to the secreted. The sequence is that of Defensin-like protein 140 (LCR15) from Arabidopsis thaliana (Mouse-ear cress).